Consider the following 180-residue polypeptide: ATP synthase subunit delta (180 aa).

This sequence belongs to the ATPase delta chain family. As to quaternary structure, F-type ATPases have 2 components, F(1) - the catalytic core - and F(0) - the membrane proton channel. F(1) has five subunits: alpha(3), beta(3), gamma(1), delta(1), epsilon(1). F(0) has three main subunits: a(1), b(2) and c(10-14). The alpha and beta chains form an alternating ring which encloses part of the gamma chain. F(1) is attached to F(0) by a central stalk formed by the gamma and epsilon chains, while a peripheral stalk is formed by the delta and b chains.

The protein resides in the cell membrane. Its function is as follows. F(1)F(0) ATP synthase produces ATP from ADP in the presence of a proton or sodium gradient. F-type ATPases consist of two structural domains, F(1) containing the extramembraneous catalytic core and F(0) containing the membrane proton channel, linked together by a central stalk and a peripheral stalk. During catalysis, ATP synthesis in the catalytic domain of F(1) is coupled via a rotary mechanism of the central stalk subunits to proton translocation. This protein is part of the stalk that links CF(0) to CF(1). It either transmits conformational changes from CF(0) to CF(1) or is implicated in proton conduction. The sequence is that of ATP synthase subunit delta from Alkaliphilus metalliredigens (strain QYMF).